A 470-amino-acid chain; its full sequence is tRNA-2-methylthio-N(6)-dimethylallyladenosine synthase (470 aa).

The region spanning 20-138 (PRVHIETFGC…LPELVERARS (119 aa)) is the MTTase N-terminal domain. [4Fe-4S] cluster is bound by residues Cys29, Cys65, Cys99, Cys176, Cys180, and Cys183. One can recognise a Radical SAM core domain in the interval 162-398 (REGDLKAWVT…MEVQNRIARA (237 aa)). In terms of domain architecture, TRAM spans 401–464 (EARVGKVYDI…TWTLEGELVE (64 aa)).

The protein belongs to the methylthiotransferase family. MiaB subfamily. Monomer. The cofactor is [4Fe-4S] cluster.

Its subcellular location is the cytoplasm. The enzyme catalyses N(6)-dimethylallyladenosine(37) in tRNA + (sulfur carrier)-SH + AH2 + 2 S-adenosyl-L-methionine = 2-methylsulfanyl-N(6)-dimethylallyladenosine(37) in tRNA + (sulfur carrier)-H + 5'-deoxyadenosine + L-methionine + A + S-adenosyl-L-homocysteine + 2 H(+). Its function is as follows. Catalyzes the methylthiolation of N6-(dimethylallyl)adenosine (i(6)A), leading to the formation of 2-methylthio-N6-(dimethylallyl)adenosine (ms(2)i(6)A) at position 37 in tRNAs that read codons beginning with uridine. The sequence is that of tRNA-2-methylthio-N(6)-dimethylallyladenosine synthase from Symbiobacterium thermophilum (strain DSM 24528 / JCM 14929 / IAM 14863 / T).